Reading from the N-terminus, the 420-residue chain is Riboflavin biosynthesis protein RibBA (420 aa).

A DHBP synthase region spans residues 1–202; sequence MTTFGTIEQA…IADLVAYRRR (202 aa). D-ribulose 5-phosphate-binding positions include 28–29, Asp-33, 141–145, and Glu-165; these read RE and RPGHT. Residue Glu-29 participates in Mg(2+) binding. His-144 lines the Mg(2+) pocket. The segment at 203–420 is GTP cyclohydrolase II; it reads TEKQVELVAE…RAVVGDGIGA (218 aa). GTP is bound at residue 253 to 257; the sequence is RVHSE. Cys-258, Cys-269, and Cys-271 together coordinate Zn(2+). GTP-binding positions include Gln-274, 297 to 299, and Thr-319; that span reads EGR. Asp-331 serves as the catalytic Proton acceptor; for GTP cyclohydrolase activity. Arg-333 (nucleophile; for GTP cyclohydrolase activity) is an active-site residue. Residues Thr-354 and Lys-359 each contribute to the GTP site.

In the N-terminal section; belongs to the DHBP synthase family. The protein in the C-terminal section; belongs to the GTP cyclohydrolase II family. Requires Mg(2+) as cofactor. It depends on Mn(2+) as a cofactor. Zn(2+) serves as cofactor.

It catalyses the reaction D-ribulose 5-phosphate = (2S)-2-hydroxy-3-oxobutyl phosphate + formate + H(+). The catalysed reaction is GTP + 4 H2O = 2,5-diamino-6-hydroxy-4-(5-phosphoribosylamino)-pyrimidine + formate + 2 phosphate + 3 H(+). It functions in the pathway cofactor biosynthesis; riboflavin biosynthesis; 2-hydroxy-3-oxobutyl phosphate from D-ribulose 5-phosphate: step 1/1. It participates in cofactor biosynthesis; riboflavin biosynthesis; 5-amino-6-(D-ribitylamino)uracil from GTP: step 1/4. In terms of biological role, catalyzes the conversion of D-ribulose 5-phosphate to formate and 3,4-dihydroxy-2-butanone 4-phosphate. Catalyzes the conversion of GTP to 2,5-diamino-6-ribosylamino-4(3H)-pyrimidinone 5'-phosphate (DARP), formate and pyrophosphate. The chain is Riboflavin biosynthesis protein RibBA from Salinispora arenicola (strain CNS-205).